A 757-amino-acid chain; its full sequence is Transferrin receptor protein 1 (757 aa).

At 1-67 (MMDQARSAIS…KHRRLNGRLC (67 aa)) the chain is on the cytoplasmic side. A mediates interaction with SH3BP4 region spans residues 1-67 (MMDQARSAIS…KHRRLNGRLC (67 aa)). Phosphoserine occurs at positions 10 and 19. The residue at position 20 (Tyr-20) is a Phosphotyrosine. An Endocytosis signal motif is present at residues 20–23 (YTRF). At Thr-21 the chain carries Phosphothreonine. Ser-24 is subject to Phosphoserine. Residues 58-61 (KHRR) carry the Stop-transfer sequence motif. Cys-67 carries S-palmitoyl cysteine lipidation. Residues 68 to 88 (FGTIAVVIFFLIGFMIGYLGY) form a helical; Signal-anchor for type II membrane protein membrane-spanning segment. Topologically, residues 89–757 (CKRTEQKDCV…GDIWDIDNEF (669 aa)) are extracellular. Thr-103 carries an O-linked (GalNAc...) threonine glycan. The PA domain maps to 220 to 310 (SKATTVSGKL…GTGDPYTPGF (91 aa)). N-linked (GlcNAc...) asparagine glycans are attached at residues Asn-248 and Asn-314. The tract at residues 566-757 (NLDTYEKLIQ…GDIWDIDNEF (192 aa)) is ligand-binding. The Cell attachment site signature appears at 643–645 (RGD). Residues Asn-719 and Asn-724 are each glycosylated (N-linked (GlcNAc...) asparagine).

It belongs to the peptidase M28 family. M28B subfamily. Homodimer; disulfide-linked. Binds one transferrin molecule per subunit. Interacts with SH3BP4. Interacts with STEAP3; facilitates TFRC endocytosis in erythroid precursor cells. Post-translationally, stearoylated by ZDHHC6 which inhibits TFRC-mediated activation of the JNK pathway and promotes mitochondrial fragmentation. Stearoylation does not affect iron uptake. In terms of processing, N- and O-glycosylated, phosphorylated and palmitoylated.

It localises to the cell membrane. Its subcellular location is the melanosome. Its function is as follows. Cellular uptake of iron occurs via receptor-mediated endocytosis of ligand-occupied transferrin receptor into specialized endosomes. Endosomal acidification leads to iron release. The apotransferrin-receptor complex is then recycled to the cell surface with a return to neutral pH and the concomitant loss of affinity of apotransferrin for its receptor. Transferrin receptor is necessary for development of erythrocytes and the nervous system. Positively regulates T and B cell proliferation through iron uptake. Acts as a lipid sensor that regulates mitochondrial fusion by regulating activation of the JNK pathway. When dietary levels of stearate (C18:0) are low, promotes activation of the JNK pathway, resulting in HUWE1-mediated ubiquitination and subsequent degradation of the mitofusin MFN2 and inhibition of mitochondrial fusion. When dietary levels of stearate (C18:0) are high, TFRC stearoylation inhibits activation of the JNK pathway and thus degradation of the mitofusin MFN2. Mediates uptake of NICOL1 into fibroblasts where it may regulate extracellular matrix production. The sequence is that of Transferrin receptor protein 1 (TFRC) from Cricetulus griseus (Chinese hamster).